The chain runs to 164 residues: Phosphopantetheine adenylyltransferase (164 aa).

Substrate is bound at residue Ser10. Residues 10–11 (SF) and His18 each bind ATP. Substrate contacts are provided by Lys42, Leu74, and Arg88. Residues 89 to 91 (GLR), Glu99, and 124 to 130 (YSFLSSS) contribute to the ATP site.

This sequence belongs to the bacterial CoaD family. In terms of assembly, homohexamer. Mg(2+) serves as cofactor.

It is found in the cytoplasm. It carries out the reaction (R)-4'-phosphopantetheine + ATP + H(+) = 3'-dephospho-CoA + diphosphate. It functions in the pathway cofactor biosynthesis; coenzyme A biosynthesis; CoA from (R)-pantothenate: step 4/5. Functionally, reversibly transfers an adenylyl group from ATP to 4'-phosphopantetheine, yielding dephospho-CoA (dPCoA) and pyrophosphate. The sequence is that of Phosphopantetheine adenylyltransferase from Exiguobacterium sibiricum (strain DSM 17290 / CCUG 55495 / CIP 109462 / JCM 13490 / 255-15).